A 291-amino-acid chain; its full sequence is Acidic endochitinase (291 aa).

An N-terminal signal peptide occupies residues 1-22; the sequence is MIKYSFLLTALVLFLRALKLEA. The GH18 domain maps to 23–291; it reads GDIVIYWGQN…GYSSAIKANV (269 aa). Intrachain disulfides connect C42/C89 and C72/C79. The active-site Proton donor is the E149. Cysteines 180 and 209 form a disulfide.

This sequence belongs to the glycosyl hydrolase 18 family. Chitinase class II subfamily.

It localises to the secreted. Its subcellular location is the cell wall. It catalyses the reaction Random endo-hydrolysis of N-acetyl-beta-D-glucosaminide (1-&gt;4)-beta-linkages in chitin and chitodextrins.. This protein functions as a defense against chitin containing fungal pathogens. The protein is Acidic endochitinase of Nicotiana tabacum (Common tobacco).